The chain runs to 664 residues: Armadillo repeat protein involved in nucleocytoplasmic transport Syo2 (664 aa).

One copy of the ARM repeat lies at 77 to 119; sequence GLVSKLIDRISDDSVEVVVEATGALRNLAIEEGYSICMDMYRK.

The protein belongs to the nuclear import and ribosome assembly adapter family. As to quaternary structure, forms a heterotrimeric complex with rpl5 and rpl11a or rpl11b; interaction of this complex with kap104 allows the nuclear import of the heterotrimer. Component of a hexameric 5S RNP precursor complex; this complex acts as a precursor for ribosome assembly.

Its subcellular location is the cytoplasm. It is found in the nucleus. In terms of biological role, nuclear import adapter that specifically recruits the two functionally and topologically linked ribosomal proteins rpl5 and rpl11 (encoded by rpl11a and rpl11b). Guarantees that this cargo pair remains bound together from the time of synthesis in the cytoplasm until delivery to the nascent 5S rRNA in the nucleus. The chain is Armadillo repeat protein involved in nucleocytoplasmic transport Syo2 from Schizosaccharomyces pombe (strain 972 / ATCC 24843) (Fission yeast).